The following is a 510-amino-acid chain: MDIRAAEISAILKSQIANFGEEAAVSDVGQVLSVGDGIARIYGLDNVQAGEMLEFPKAGVKGMALNLERDNVGAVIFGQDQEIKEGDEVRRLGEIVDVPVGRGLLGRVVNPLGEPIDGKGPIQYTERRRVDVKAPGIIPRKSVHEPVQTGLKSIDTLIPVGRGQRELIIGDRQTGKTAVAIDTILNQKAVNAGKDESAKLYCVYVAIGQKRSTVAQIVKTLEEHGALEYTTVVVASASEPAPLQYLAPFAGCAMGEWFRDNGLHGLIIYDDLSKQAVAYRQMSLLLRRPPGREAYPGDVFYLHSRLLERAAKLNEDNGSGSLTALPIIETQANDVSAYIPTNVISITDGQIFLETDLFYQGIRPAVNVGISVSRVGSSAQIKAMKQVAGPIKGELAQYREMAAFAKFGSDLDASTQKMLARGERLTELLKQPQYAPLSVEEQVCVIYAGTRGYLDGIPTSSVRRFEAEFLARLHSQHADLLEGIRTKKALDKDLENTLKSALDSFSSTFA.

170–177 (GDRQTGKT) provides a ligand contact to ATP.

The protein belongs to the ATPase alpha/beta chains family. F-type ATPases have 2 components, CF(1) - the catalytic core - and CF(0) - the membrane proton channel. CF(1) has five subunits: alpha(3), beta(3), gamma(1), delta(1), epsilon(1). CF(0) has three main subunits: a(1), b(2) and c(9-12). The alpha and beta chains form an alternating ring which encloses part of the gamma chain. CF(1) is attached to CF(0) by a central stalk formed by the gamma and epsilon chains, while a peripheral stalk is formed by the delta and b chains.

The protein localises to the cell inner membrane. The catalysed reaction is ATP + H2O + 4 H(+)(in) = ADP + phosphate + 5 H(+)(out). In terms of biological role, produces ATP from ADP in the presence of a proton gradient across the membrane. The alpha chain is a regulatory subunit. In Caulobacter vibrioides (strain ATCC 19089 / CIP 103742 / CB 15) (Caulobacter crescentus), this protein is ATP synthase subunit alpha.